A 90-amino-acid polypeptide reads, in one-letter code: UPF0298 protein SSU05_1549 (90 aa).

The protein belongs to the UPF0298 family.

It localises to the cytoplasm. The protein is UPF0298 protein SSU05_1549 of Streptococcus suis (strain 05ZYH33).